The sequence spans 311 residues: Cytochrome f (311 aa).

The first 27 residues, 1–27 (MRRHLSLLIGSLVLGLSLLIAPAASWA), serve as a signal peptide directing secretion. Residues Y28, C48, C51, and H52 each contribute to the heme site. Residues 277–297 (IYGLLAFFAAVALAQIMLVLK) form a helical membrane-spanning segment.

It belongs to the cytochrome f family. As to quaternary structure, the 4 large subunits of the cytochrome b6-f complex are cytochrome b6, subunit IV (17 kDa polypeptide, PetD), cytochrome f and the Rieske protein, while the 4 small subunits are PetG, PetL, PetM and PetN. The complex functions as a dimer. It depends on heme as a cofactor.

It localises to the cellular thylakoid membrane. Its function is as follows. Component of the cytochrome b6-f complex, which mediates electron transfer between photosystem II (PSII) and photosystem I (PSI), cyclic electron flow around PSI, and state transitions. The protein is Cytochrome f of Parasynechococcus marenigrum (strain WH8102).